The sequence spans 339 residues: MTERISLTRYLVEQQRVHGRIPPQLRLLVEVVARACKRISFAVNKGDLGDVMGTAGTENVQGEVQKKLDIIANEVLIEANEWGGHLAAMASEEMDGIYVVPNRFPQGEHLLMFDPLDGSSNIDVNVSIGTIFSVLHKHHDDPTTDEPVTEADFLQPGHQQVAAGYCIYGPQTTLVLTVGDGVAMFTLDREQGSFVLTRENIRIPEDTKEFAINMSNMRHWDAPVRRYIDECLQGKEGPRGKDFNMRWIASMVADVHRILMRGGIFMYPWDKREPNKPGKLRLMYEANPMGWLVEQAGGAATNGRQRILDIQPAQLHERVSVILGSKNEVDRVTSYHSGI.

4 residues coordinate Mg(2+): E92, D114, L116, and D117. Substrate-binding positions include 117–120 (DGSS), N213, and K279. E285 serves as a coordination point for Mg(2+).

Belongs to the FBPase class 1 family. In terms of assembly, homotetramer. Requires Mg(2+) as cofactor.

The protein localises to the cytoplasm. It catalyses the reaction beta-D-fructose 1,6-bisphosphate + H2O = beta-D-fructose 6-phosphate + phosphate. It functions in the pathway carbohydrate biosynthesis; gluconeogenesis. The polypeptide is Fructose-1,6-bisphosphatase class 1 (Acidovorax sp. (strain JS42)).